An 837-amino-acid chain; its full sequence is Striatin-interacting protein 1 (837 aa).

Residue Met1 is modified to N-acetylmethionine. Disordered stretches follow at residues 1–67 (MEPA…ESPD) and 333–423 (AASP…KGLP). A compositionally biased stretch (pro residues) spans 18–35 (PQPPPPPPPATAQPPPGA). Low complexity predominate over residues 36 to 46 (PRAAAGLLPGG). Residues 47-60 (KAREFNRNQRKDSE) are compositionally biased toward basic and acidic residues. Phosphoserine is present on residues Ser59, Ser335, and Ser339. Residues 333-343 (AASPPASASDS) show a composition bias toward low complexity. Residues 356 to 377 (KALIKQDNLDAFNERDPYKADD) are compositionally biased toward basic and acidic residues. The segment covering 378–391 (SREEEEENDDDNSL) has biased composition (acidic residues). The residue at position 788 (Ser788) is a Phosphoserine. The required for STRIPAK core complex formation stretch occupies residues 796 to 837 (DNCLQSVLGQRVDLPEDFQMNYDLWLEREVFSKPISWEELLQ).

Belongs to the STRIP family. Part of the core of STRIPAK complexes composed of PP2A catalytic and scaffolding subunits, the striatins (PP2A regulatory subunits), the striatin-associated proteins MOB4, STRIP1 and STRIP2, PDCD10 and members of the STE20 kinases, such as STK24 and STK26. The STRIPAK complex can be extended by adapter proteins such as SLMAP:SIKE1, CTTNBP2 or CTTNBP2NL. Interacts with CDC42BPB. Interacts with CTTNBP2NL.

The protein localises to the cytoplasm. Its function is as follows. Plays a role in the regulation of cell morphology and cytoskeletal organization. Required in the cortical actin filament dynamics and cell shape. Part of the striatin-interacting phosphatase and kinase (STRIPAK) complexes. STRIPAK complexes have critical roles in protein (de)phosphorylation and are regulators of multiple signaling pathways including Hippo, MAPK, nuclear receptor and cytoskeleton remodeling. Different types of STRIPAK complexes are involved in a variety of biological processes such as cell growth, differentiation, apoptosis, metabolism and immune regulation. The sequence is that of Striatin-interacting protein 1 (STRIP1) from Pongo abelii (Sumatran orangutan).